The chain runs to 696 residues: Polyribonucleotide nucleotidyltransferase (696 aa).

2 residues coordinate Mg(2+): aspartate 483 and aspartate 489. Residues 550-609 enclose the KH domain; that stretch reads PRITTIYVKTDKIRDVIGSGGKNIRGITEATGVTIDIDDTGKINIASTDKAACDLAIKMI. The S1 motif domain occupies 619 to 687; it reads GKLYMGLVKK…KQGKIKLSRK (69 aa).

This sequence belongs to the polyribonucleotide nucleotidyltransferase family. Mg(2+) is required as a cofactor.

The protein resides in the cytoplasm. The enzyme catalyses RNA(n+1) + phosphate = RNA(n) + a ribonucleoside 5'-diphosphate. Involved in mRNA degradation. Catalyzes the phosphorolysis of single-stranded polyribonucleotides processively in the 3'- to 5'-direction. The protein is Polyribonucleotide nucleotidyltransferase of Geotalea uraniireducens (strain Rf4) (Geobacter uraniireducens).